The primary structure comprises 246 residues: Acetoacetate decarboxylase (246 aa).

The active-site Schiff-base intermediate with acetoacetate is Lys116.

This sequence belongs to the ADC family.

It carries out the reaction acetoacetate + H(+) = acetone + CO2. Functionally, catalyzes the conversion of acetoacetate to acetone and carbon dioxide. The chain is Acetoacetate decarboxylase from Burkholderia lata (strain ATCC 17760 / DSM 23089 / LMG 22485 / NCIMB 9086 / R18194 / 383).